The sequence spans 166 residues: Large ribosomal subunit protein uL10 (166 aa).

This sequence belongs to the universal ribosomal protein uL10 family. In terms of assembly, part of the ribosomal stalk of the 50S ribosomal subunit. The N-terminus interacts with L11 and the large rRNA to form the base of the stalk. The C-terminus forms an elongated spine to which L12 dimers bind in a sequential fashion forming a multimeric L10(L12)X complex.

Forms part of the ribosomal stalk, playing a central role in the interaction of the ribosome with GTP-bound translation factors. The chain is Large ribosomal subunit protein uL10 from Streptococcus pneumoniae serotype 19F (strain G54).